The chain runs to 288 residues: Ribosomal RNA small subunit methyltransferase A (288 aa).

S-adenosyl-L-methionine contacts are provided by N18, L20, G45, E66, D91, and N118.

The protein belongs to the class I-like SAM-binding methyltransferase superfamily. rRNA adenine N(6)-methyltransferase family. RsmA subfamily.

The protein localises to the cytoplasm. It catalyses the reaction adenosine(1518)/adenosine(1519) in 16S rRNA + 4 S-adenosyl-L-methionine = N(6)-dimethyladenosine(1518)/N(6)-dimethyladenosine(1519) in 16S rRNA + 4 S-adenosyl-L-homocysteine + 4 H(+). In terms of biological role, specifically dimethylates two adjacent adenosines (A1518 and A1519) in the loop of a conserved hairpin near the 3'-end of 16S rRNA in the 30S particle. May play a critical role in biogenesis of 30S subunits. This is Ribosomal RNA small subunit methyltransferase A from Mannheimia succiniciproducens (strain KCTC 0769BP / MBEL55E).